The chain runs to 341 residues: Radial spoke head 14 homolog (341 aa).

ARM repeat units lie at residues 16–55, 57–96, 99–138, 139–178, 180–217, 219–258, 260–300, and 302–339; these read PTKA…DLMH, PEYV…IMAT, VGRV…LAQL, PKGA…LCLQ, DATE…AISI, LDGK…HATV, TEGK…MLAE, and PEGR…VIEW.

The protein belongs to the flagellar radial spoke RSP14 family. In terms of assembly, component of the axonemal radial spoke complex 1 (RS1), at least composed of spoke head proteins RSPH1, RSPH3, RSPH9 and the cilia-specific component RSPH4A or sperm-specific component RSPH6A, spoke stalk proteins RSPH14, DNAJB13, DYDC1, ROPN1L and NME5, and the anchor protein IQUB.

It is found in the cytoplasm. The protein localises to the cytoskeleton. Its subcellular location is the flagellum axoneme. In terms of biological role, functions as part of axonemal radial spoke complexes that play an important part in the motility of sperm and cilia. This is Radial spoke head 14 homolog from Mus musculus (Mouse).